A 751-amino-acid chain; its full sequence is ABC transporter G family member 22 (751 aa).

Residues 26–81 (ADIRSPHGSMDANGVPATAPAAVGGGGTLSRKSSRRLMGMSPGRSSGAGTHIRKSR) are disordered. The 247-residue stretch at 157–403 (LKFRDVTYKV…FSSIGCSPLI (247 aa)) folds into the ABC transporter domain. 197-204 (GPSGSGKT) contributes to the ATP binding site. Residues 498–707 (EQYCILFCRG…TYKLLLKVQY (210 aa)) enclose the ABC transmembrane type-2 domain. Helical transmembrane passes span 516 to 536 (FSWL…LLWW), 552 to 572 (LLFF…IFAF), 602 to 622 (LPLD…MTGL), 634 to 654 (LTVF…GAIL), 666 to 686 (VTVM…PVFI), and 722 to 742 (GLTE…LAYL).

Belongs to the ABC transporter superfamily. ABCG family. Eye pigment precursor importer (TC 3.A.1.204) subfamily.

It is found in the membrane. The protein is ABC transporter G family member 22 (ABCG22) of Arabidopsis thaliana (Mouse-ear cress).